Reading from the N-terminus, the 163-residue chain is NADH-quinone oxidoreductase subunit I (163 aa).

4Fe-4S ferredoxin-type domains follow at residues 53–83 (LRRY…IEAG) and 94–123 (VRYD…EGPN). Residues cysteine 63, cysteine 66, cysteine 69, cysteine 73, cysteine 103, cysteine 106, cysteine 109, and cysteine 113 each coordinate [4Fe-4S] cluster.

It belongs to the complex I 23 kDa subunit family. As to quaternary structure, NDH-1 is composed of 14 different subunits. Subunits NuoA, H, J, K, L, M, N constitute the membrane sector of the complex. Requires [4Fe-4S] cluster as cofactor.

Its subcellular location is the cell inner membrane. The enzyme catalyses a quinone + NADH + 5 H(+)(in) = a quinol + NAD(+) + 4 H(+)(out). In terms of biological role, NDH-1 shuttles electrons from NADH, via FMN and iron-sulfur (Fe-S) centers, to quinones in the respiratory chain. The immediate electron acceptor for the enzyme in this species is believed to be ubiquinone. Couples the redox reaction to proton translocation (for every two electrons transferred, four hydrogen ions are translocated across the cytoplasmic membrane), and thus conserves the redox energy in a proton gradient. The sequence is that of NADH-quinone oxidoreductase subunit I from Bartonella bacilliformis (strain ATCC 35685 / KC583 / Herrer 020/F12,63).